The primary structure comprises 1485 residues: Chromosome partition protein MukB (1485 aa).

34–41 (GGNGAGKS) contacts ATP. Coiled coils occupy residues 337-480 (LNLV…QAYQ), 509-605 (QHLA…PVWL), 780-805 (RAAR…ATLS), 835-915 (EAEI…IQQH), 977-1116 (GMLT…AKAG), and 1210-1235 (EAIE…KLAI). Residues 666–783 (PSGAEDARLI…EVPLFGRAAR (118 aa)) are flexible hinge.

This sequence belongs to the SMC family. MukB subfamily. Homodimerization via its hinge domain. Binds to DNA via its C-terminal region. Interacts, and probably forms a ternary complex, with MukE and MukF via its C-terminal region. The complex formation is stimulated by calcium or magnesium. Interacts with tubulin-related protein FtsZ.

Its subcellular location is the cytoplasm. It is found in the nucleoid. Functionally, plays a central role in chromosome condensation, segregation and cell cycle progression. Functions as a homodimer, which is essential for chromosome partition. Involved in negative DNA supercoiling in vivo, and by this means organize and compact chromosomes. May achieve or facilitate chromosome segregation by condensation DNA from both sides of a centrally located replisome during cell division. The polypeptide is Chromosome partition protein MukB (Yersinia pestis bv. Antiqua (strain Antiqua)).